The sequence spans 307 residues: 4-hydroxythreonine-4-phosphate dehydrogenase (307 aa).

Substrate-binding residues include H126 and T127. 3 residues coordinate a divalent metal cation: H156, H195, and H251. Substrate-binding residues include K259, N268, and R277.

It belongs to the PdxA family. In terms of assembly, homodimer. Requires Zn(2+) as cofactor. It depends on Mg(2+) as a cofactor. The cofactor is Co(2+).

The protein resides in the cytoplasm. The catalysed reaction is 4-(phosphooxy)-L-threonine + NAD(+) = 3-amino-2-oxopropyl phosphate + CO2 + NADH. It participates in cofactor biosynthesis; pyridoxine 5'-phosphate biosynthesis; pyridoxine 5'-phosphate from D-erythrose 4-phosphate: step 4/5. In terms of biological role, catalyzes the NAD(P)-dependent oxidation of 4-(phosphooxy)-L-threonine (HTP) into 2-amino-3-oxo-4-(phosphooxy)butyric acid which spontaneously decarboxylates to form 3-amino-2-oxopropyl phosphate (AHAP). In Helicobacter pylori (strain P12), this protein is 4-hydroxythreonine-4-phosphate dehydrogenase.